A 118-amino-acid polypeptide reads, in one-letter code: MAGRSGDRDEDLLKAVRLIKILYQSNPPPSPEGTRQARRNRRRRWRARQRQIHSIGERILSTYLGRSEEPVPLQLPPLERLNLNCSEDCGASGTQGVGSPQISVESPTVLESGTEEQC.

Serine 5 carries the post-translational modification Phosphoserine; by host CK2. Residues 18-26 are homomultimerization; it reads LIKILYQSN. Positions 23–49 are disordered; the sequence is YQSNPPPSPEGTRQARRNRRRRWRARQ. The short motif at 34–50 is the Nuclear localization signal and RNA-binding (RRE) element; the sequence is TRQARRNRRRRWRARQR. Basic residues predominate over residues 36-49; the sequence is QARRNRRRRWRARQ. The Nuclear export signal and binding to XPO1 signature appears at 73 to 84; that stretch reads LQLPPLERLNLN. The segment at 89 to 118 is disordered; the sequence is CGASGTQGVGSPQISVESPTVLESGTEEQC. 2 positions are modified to phosphoserine; by host: serine 92 and serine 99. Residues 92 to 112 show a composition bias toward polar residues; sequence SGTQGVGSPQISVESPTVLES.

It belongs to the HIV-1 REV protein family. As to quaternary structure, homomultimer; when bound to the RRE. Multimeric assembly is essential for activity and may involve XPO1. Binds to human KPNB1, XPO1, TNPO1, RANBP5 and IPO7. Interacts with the viral Integrase. Interacts with human KHDRBS1. Interacts with human NAP1; this interaction decreases Rev multimerization and stimulates its activity. Interacts with human DEAD-box helicases DDX3 and DDX24; these interactions may serve for viral RNA export to the cytoplasm and packaging, respectively. Interacts with human PSIP1; this interaction may inhibit HIV-1 DNA integration by promoting dissociation of the Integrase-LEDGF/p75 complex. Post-translationally, asymmetrically arginine dimethylated at one site by host PRMT6. Methylation impairs the RNA-binding activity and export of viral RNA from the nucleus to the cytoplasm. In terms of processing, phosphorylated by protein kinase CK2. Presence of, and maybe binding to the N-terminus of the regulatory beta subunit of CK2 is necessary for CK2-mediated Rev's phosphorylation.

The protein resides in the host nucleus. It is found in the host nucleolus. It localises to the host cytoplasm. In terms of biological role, escorts unspliced or incompletely spliced viral pre-mRNAs (late transcripts) out of the nucleus of infected cells. These pre-mRNAs carry a recognition sequence called Rev responsive element (RRE) located in the env gene, that is not present in fully spliced viral mRNAs (early transcripts). This function is essential since most viral proteins are translated from unspliced or partially spliced pre-mRNAs which cannot exit the nucleus by the pathway used by fully processed cellular mRNAs. Rev itself is translated from a fully spliced mRNA that readily exits the nucleus. Rev's nuclear localization signal (NLS) binds directly to KPNB1/Importin beta-1 without previous binding to KPNA1/Importin alpha-1. KPNB1 binds to the GDP bound form of RAN (Ran-GDP) and targets Rev to the nucleus. In the nucleus, the conversion from Ran-GDP to Ran-GTP dissociates Rev from KPNB1 and allows Rev's binding to the RRE in viral pre-mRNAs. Rev multimerization on the RRE via cooperative assembly exposes its nuclear export signal (NES) to the surface. Rev can then form a complex with XPO1/CRM1 and Ran-GTP, leading to nuclear export of the complex. Conversion from Ran-GTP to Ran-GDP mediates dissociation of the Rev/RRE/XPO1/RAN complex, so that Rev can return to the nucleus for a subsequent round of export. Beside KPNB1, also seems to interact with TNPO1/Transportin-1, RANBP5/IPO5 and IPO7/RANBP7 for nuclear import. The nucleoporin-like HRB/RIP is an essential cofactor that probably indirectly interacts with Rev to release HIV RNAs from the perinuclear region to the cytoplasm. The sequence is that of Protein Rev from Human immunodeficiency virus type 1 group M subtype D (isolate Z2/CDC-Z34) (HIV-1).